A 194-amino-acid polypeptide reads, in one-letter code: Large ribosomal subunit protein uL5 (194 aa).

This sequence belongs to the universal ribosomal protein uL5 family. In terms of assembly, part of the 50S ribosomal subunit; part of the 5S rRNA/L5/L18/L25 subcomplex. Contacts the 5S rRNA and the P site tRNA. Forms a bridge to the 30S subunit in the 70S ribosome.

This is one of the proteins that bind and probably mediate the attachment of the 5S RNA into the large ribosomal subunit, where it forms part of the central protuberance. In the 70S ribosome it contacts protein S13 of the 30S subunit (bridge B1b), connecting the 2 subunits; this bridge is implicated in subunit movement. Contacts the P site tRNA; the 5S rRNA and some of its associated proteins might help stabilize positioning of ribosome-bound tRNAs. The chain is Large ribosomal subunit protein uL5 from Frankia alni (strain DSM 45986 / CECT 9034 / ACN14a).